Consider the following 186-residue polypeptide: Ribosome-recycling factor (186 aa).

The protein belongs to the RRF family.

The protein resides in the cytoplasm. Responsible for the release of ribosomes from messenger RNA at the termination of protein biosynthesis. May increase the efficiency of translation by recycling ribosomes from one round of translation to another. This Rickettsia conorii (strain ATCC VR-613 / Malish 7) protein is Ribosome-recycling factor.